Here is a 121-residue protein sequence, read N- to C-terminus: C-X-C motif chemokine 11-6 (121 aa).

The first 20 residues, methionine 1–glycine 20, serve as a signal peptide directing secretion. Cystine bridges form between cysteine 29–cysteine 56 and cysteine 31–cysteine 73. Residues glutamine 95–lysine 121 are disordered. Over residues serine 100–serine 115 the composition is skewed to low complexity.

Belongs to the intercrine alpha (chemokine CxC) family.

The protein localises to the secreted. Its function is as follows. Ligand for cxcr3.2. Chemotactic for macrophages. The protein is C-X-C motif chemokine 11-6 of Danio rerio (Zebrafish).